The following is a 310-amino-acid chain: tRNA-cytidine(32) 2-sulfurtransferase (310 aa).

Residues 48–53 carry the PP-loop motif motif; the sequence is SGGKDS. [4Fe-4S] cluster contacts are provided by cysteine 123, cysteine 126, and cysteine 214.

The protein belongs to the TtcA family. As to quaternary structure, homodimer. Mg(2+) is required as a cofactor. The cofactor is [4Fe-4S] cluster.

It localises to the cytoplasm. The catalysed reaction is cytidine(32) in tRNA + S-sulfanyl-L-cysteinyl-[cysteine desulfurase] + AH2 + ATP = 2-thiocytidine(32) in tRNA + L-cysteinyl-[cysteine desulfurase] + A + AMP + diphosphate + H(+). It participates in tRNA modification. In terms of biological role, catalyzes the ATP-dependent 2-thiolation of cytidine in position 32 of tRNA, to form 2-thiocytidine (s(2)C32). The sulfur atoms are provided by the cysteine/cysteine desulfurase (IscS) system. This chain is tRNA-cytidine(32) 2-sulfurtransferase, found in Vibrio cholerae serotype O1 (strain ATCC 39315 / El Tor Inaba N16961).